The following is a 91-amino-acid chain: Cell division topological specificity factor (91 aa).

It belongs to the MinE family.

Prevents the cell division inhibition by proteins MinC and MinD at internal division sites while permitting inhibition at polar sites. This ensures cell division at the proper site by restricting the formation of a division septum at the midpoint of the long axis of the cell. This is Cell division topological specificity factor from Chloroflexus aurantiacus (strain ATCC 29366 / DSM 635 / J-10-fl).